The following is a 248-amino-acid chain: Isoprenyl transferase (248 aa).

D23 is a catalytic residue. D23 is a binding site for Mg(2+). Substrate is bound by residues 24-27, W28, R36, H40, and 68-70; these read GNGR and STE. The Proton acceptor role is filled by N71. Residues W72, R74, R185, and 191–193 contribute to the substrate site; that span reads RIS. E204 is a Mg(2+) binding site.

It belongs to the UPP synthase family. As to quaternary structure, homodimer. Mg(2+) is required as a cofactor.

In terms of biological role, catalyzes the condensation of isopentenyl diphosphate (IPP) with allylic pyrophosphates generating different type of terpenoids. This Neisseria meningitidis serogroup A / serotype 4A (strain DSM 15465 / Z2491) protein is Isoprenyl transferase.